The following is a 182-amino-acid chain: Ribosome-recycling factor (182 aa).

Residues 136 to 156 (IRKQEKNSDISKDESRDLQDK) form a disordered region.

Belongs to the RRF family.

Its subcellular location is the cytoplasm. In terms of biological role, responsible for the release of ribosomes from messenger RNA at the termination of protein biosynthesis. May increase the efficiency of translation by recycling ribosomes from one round of translation to another. This chain is Ribosome-recycling factor, found in Trichodesmium erythraeum (strain IMS101).